The primary structure comprises 410 residues: Gamma-glutamyl phosphate reductase (410 aa).

The protein belongs to the gamma-glutamyl phosphate reductase family.

The protein resides in the cytoplasm. The catalysed reaction is L-glutamate 5-semialdehyde + phosphate + NADP(+) = L-glutamyl 5-phosphate + NADPH + H(+). It participates in amino-acid biosynthesis; L-proline biosynthesis; L-glutamate 5-semialdehyde from L-glutamate: step 2/2. In terms of biological role, catalyzes the NADPH-dependent reduction of L-glutamate 5-phosphate into L-glutamate 5-semialdehyde and phosphate. The product spontaneously undergoes cyclization to form 1-pyrroline-5-carboxylate. The protein is Gamma-glutamyl phosphate reductase of Campylobacter jejuni subsp. jejuni serotype O:23/36 (strain 81-176).